Here is a 232-residue protein sequence, read N- to C-terminus: Ribonuclease P protein component 3 (232 aa).

Belongs to the eukaryotic/archaeal RNase P protein component 3 family. Consists of a catalytic RNA component and at least 4-5 protein subunits.

The protein resides in the cytoplasm. The enzyme catalyses Endonucleolytic cleavage of RNA, removing 5'-extranucleotides from tRNA precursor.. Functionally, part of ribonuclease P, a protein complex that generates mature tRNA molecules by cleaving their 5'-ends. The sequence is that of Ribonuclease P protein component 3 from Methanococcus maripaludis (strain C6 / ATCC BAA-1332).